A 235-amino-acid chain; its full sequence is uncharacterized protein (235 aa).

3 helical membrane passes run 41–61, 71–91, and 129–149; these read IFWH…IYRL, LRTF…IEFP, and IGII…TPTI.

The protein localises to the membrane. This is an uncharacterized protein from Schizosaccharomyces pombe (strain 972 / ATCC 24843) (Fission yeast).